We begin with the raw amino-acid sequence, 569 residues long: TBCC domain-containing protein 1 (569 aa).

The region spanning 304 to 435 is the C-CAP/cofactor C-like domain; sequence PRSHRIVVMS…LEDHMARTGL (132 aa).

This sequence belongs to the TBCC family.

Its subcellular location is the cytoplasm. The protein resides in the cytoskeleton. It is found in the microtubule organizing center. The protein localises to the centrosome. It localises to the spindle pole. In terms of biological role, plays a role in the regulation of centrosome and Golgi apparatus positioning, with consequences on cell shape and cell migration. This is TBCC domain-containing protein 1 (Tbccd1) from Rattus norvegicus (Rat).